An 805-amino-acid polypeptide reads, in one-letter code: FAD-dependent monooxygenase verC1 (805 aa).

The first 20 residues, 1–20 (MTFRVIIVGGGVAGLTLASA), serve as a signal peptide directing secretion. Residues E32, A46, and R107 each contribute to the FAD site. A glycan (N-linked (GlcNAc...) asparagine) is linked at N132. Residue Y214 is part of the active site. D306 and A319 together coordinate FAD. A run of 7 helical transmembrane segments spans residues 551–571 (ALTM…AGLG), 604–624 (IAVL…AFFW), 632–652 (SWLF…YLFS), 671–691 (LPVI…FWMW), 703–723 (VFFP…VCAI), 726–746 (WDML…IWDL), and 761–781 (IYGV…LGWL).

This sequence belongs to the paxM FAD-dependent monooxygenase family.

It is found in the membrane. Its pathway is secondary metabolite biosynthesis; terpenoid biosynthesis. It participates in mycotoxin biosynthesis. Functionally, FAD-dependent monooxygenase; part of the gene cluster that mediates the biosynthesis of the neurotoxin verrucosidin, a methylated alpha-pyrone polyketide that inhibits oxidative phosphorylation in mitochondria and thereby causes neurological diseases. The carbon backbone of verrucosidin is synthesized by the HR-PKS verA, and further modified by the other verrucodidin cluster enzymes. This is FAD-dependent monooxygenase verC1 from Penicillium polonicum.